A 384-amino-acid polypeptide reads, in one-letter code: Succinyl-diaminopimelate desuccinylase (384 aa).

H69 lines the Zn(2+) pocket. D71 is an active-site residue. D103 contacts Zn(2+). E137 (proton acceptor) is an active-site residue. E138, E166, and H355 together coordinate Zn(2+).

The protein belongs to the peptidase M20A family. DapE subfamily. In terms of assembly, homodimer. Requires Zn(2+) as cofactor. The cofactor is Co(2+).

It carries out the reaction N-succinyl-(2S,6S)-2,6-diaminopimelate + H2O = (2S,6S)-2,6-diaminopimelate + succinate. It participates in amino-acid biosynthesis; L-lysine biosynthesis via DAP pathway; LL-2,6-diaminopimelate from (S)-tetrahydrodipicolinate (succinylase route): step 3/3. Functionally, catalyzes the hydrolysis of N-succinyl-L,L-diaminopimelic acid (SDAP), forming succinate and LL-2,6-diaminopimelate (DAP), an intermediate involved in the bacterial biosynthesis of lysine and meso-diaminopimelic acid, an essential component of bacterial cell walls. This Rickettsia canadensis (strain McKiel) protein is Succinyl-diaminopimelate desuccinylase.